A 178-amino-acid chain; its full sequence is Matrix-remodeling-associated protein 7 (178 aa).

The chain crosses the membrane as a helical span at residues 7–27 (LLAALPALVTALALLLAWLLL). Residues 33-121 (RVPAPESTAS…AFSFKYSPGQ (89 aa)) are disordered. Over residues 48–65 (APAPPEPPESCAPEPAPE) the composition is skewed to pro residues. Residues 76–85 (PEESEAEEPA) show a composition bias toward acidic residues. Ser79 and Ser165 each carry phosphoserine.

The protein resides in the membrane. The sequence is that of Matrix-remodeling-associated protein 7 (Mxra7) from Mus musculus (Mouse).